A 100-amino-acid chain; its full sequence is MELTPREKDKLLLFTAGLVAERRLAKGLKLNYPEAVALISCAIMEGAREGKTVAQLMSEGRTVLTAEQVMEGVPEMIKDVQVECTFPDGTKLVSIHSPIV.

It belongs to the urease gamma subunit family. In terms of assembly, probable heterotrimer of UreA (gamma), UreB (beta) and UreC (alpha) subunits. Three heterotrimers associate to form the active enzyme. The trimeric urease interacts with an accessory complex composed of UreD, UreF and UreG, which is required for the assembly of the nickel containing metallocenter of UreC. The UreE protein may also play a direct role in nickel transfer to the urease apoprotein.

It localises to the cytoplasm. It carries out the reaction urea + 2 H2O + H(+) = hydrogencarbonate + 2 NH4(+). The protein operates within nitrogen metabolism; urea degradation; CO(2) and NH(3) from urea (urease route): step 1/1. This is Urease subunit gamma from Proteus mirabilis (strain HI4320).